The following is a 509-amino-acid chain: Cytochrome P450 monooxygenase LUC2 (509 aa).

Residues 30–50 (TKVLVTFLTIVIIAPRVFTVI) form a helical membrane-spanning segment. Cysteine 456 contacts heme.

It belongs to the cytochrome P450 family. The cofactor is heme.

Its subcellular location is the membrane. Its pathway is mycotoxin biosynthesis. Cytochrome P450 monooxygenase; part of the gene cluster that mediates the biosynthesis of the mycotoxin lucilactaene and the lucilactaene-related compound NG-391 that act as cell cycle inhibitors with potent growth inhibitory activity against malarial parasites, moderate growth inhibitory activity against cancer cells, and no activity against bacteria and fungi. Within the pathway, LUC2 performs C-20 methyl group hydroxylation of several intermediates. LUC2 does not perform the full oxidation of the C-20 methyl group into carboxylic acid, which is a prerequisite for the final methylation step. The pathway begins with the hybrid PKS-NRPS synthetase LUC5 which is responsible for the condensation of one acetyl-coenzyme A (CoA) unit with six malonyl-CoA units and the amide linkage of the arising heptaketide and homoserine, subsequently releasing the first intermediate prelucilactaene B. Both the cytochrome P450 monooxygenase LUC2 and the hydrolase LUC6 function in parallel in modification of prelucilactaene B. LUC6 may catalyze the 2-pyrrolidone ring formation to form prelucilactaene C from prelucilactaene B, followed by C-15 hydroxylation by the same enzyme to give prelucilactaene D, which is then converted to prelucilactaene E by epoxidation, and finally to prelucilactaene F by cyclization. Prelucilactane D, prelucilactaene E, and prelucilactaene F can be converted to dihydrolucilactaene, NG391, and lucilactaene, respectively, via C-20 methyl group hydroxylation by the cytochrome P450 monooxygenase LUC2. However, LUC2, unlike FUS8 in fusarin C biosynthesis, is not enough for the full oxidation of the C-20 methyl group into carboxylic acid, which is a prerequisite for the final methylation step. The aldehyde dehydrogenase LUC3 is involved in the biosynthesis by further oxidation of the C-20 alcoholic analog prelucilactaene G into a carboxylic derivative. This unidentified carboxylic derivative may be converted to demethyllucilactaene. As the last step, the methyltransferase LUC1 methylates the hydroxyl group at C-21 of demethyllucilactaene to generate lucilactaene. The polypeptide is Cytochrome P450 monooxygenase LUC2 (Fusarium sp).